Here is a 494-residue protein sequence, read N- to C-terminus: Aspartyl/glutamyl-tRNA(Asn/Gln) amidotransferase subunit B (494 aa).

Belongs to the GatB/GatE family. GatB subfamily. Heterotrimer of A, B and C subunits.

The enzyme catalyses L-glutamyl-tRNA(Gln) + L-glutamine + ATP + H2O = L-glutaminyl-tRNA(Gln) + L-glutamate + ADP + phosphate + H(+). The catalysed reaction is L-aspartyl-tRNA(Asn) + L-glutamine + ATP + H2O = L-asparaginyl-tRNA(Asn) + L-glutamate + ADP + phosphate + 2 H(+). Functionally, allows the formation of correctly charged Asn-tRNA(Asn) or Gln-tRNA(Gln) through the transamidation of misacylated Asp-tRNA(Asn) or Glu-tRNA(Gln) in organisms which lack either or both of asparaginyl-tRNA or glutaminyl-tRNA synthetases. The reaction takes place in the presence of glutamine and ATP through an activated phospho-Asp-tRNA(Asn) or phospho-Glu-tRNA(Gln). The polypeptide is Aspartyl/glutamyl-tRNA(Asn/Gln) amidotransferase subunit B (Rhizorhabdus wittichii (strain DSM 6014 / CCUG 31198 / JCM 15750 / NBRC 105917 / EY 4224 / RW1) (Sphingomonas wittichii)).